Consider the following 529-residue polypeptide: BAR/IMD domain-containing adapter protein 2-like 2 (529 aa).

The 239-residue stretch at 1-239 (MAPEMDQFYR…HSPGLLGPAL (239 aa)) folds into the IMD domain. Disordered regions lie at residues 221–327 (EASR…GGAR) and 403–510 (TSMS…TNPF). Ser-231, Ser-272, and Ser-302 each carry phosphoserine. A compositionally biased stretch (low complexity) spans 299–313 (SASSLYSGSAQSSRS). Positions 324–387 (GGARRVRALV…PEAYVKALEE (64 aa)) constitute an SH3 domain. Low complexity-rich tracts occupy residues 403–413 (TSMSPMTPMNP) and 452–462 (RSRTPSRVPSR). The span at 463–472 (APSPAPPPLP) shows a compositional bias: pro residues. Phosphoserine is present on residues Ser-478 and Ser-481.

In terms of tissue distribution, expressed in the epithelial layer of the intestine (at protein level).

Its subcellular location is the cell membrane. It is found in the cell junction. It localises to the cytoplasmic vesicle membrane. Phosphoinositides-binding protein that induces the formation of planar or gently curved membrane structures. Binds to phosphoinositides, including to phosphatidylinositol 4,5-bisphosphate (PtdIns(4,5)P2) headgroups. There seems to be no clear preference for a specific phosphoinositide. This is BAR/IMD domain-containing adapter protein 2-like 2 (BAIAP2L2) from Homo sapiens (Human).